We begin with the raw amino-acid sequence, 1167 residues long: Integrin alpha-10 (1167 aa).

The signal sequence occupies residues 1-22 (MELPFVTHLFLPLVFLTGLCSP). Residues 23–1122 (FNLDEHHPRL…VVQTRPILIS (1100 aa)) are Extracellular-facing. 2 FG-GAP repeats span residues 24-85 (NLDE…HNAP) and 95-154 (QLGN…PQGS). A disulfide bond links cysteine 76 and cysteine 86. 4 N-linked (GlcNAc...) asparagine glycosylation sites follow: asparagine 98, asparagine 234, asparagine 336, and asparagine 364. A VWFA domain is found at 167 to 350 (DVVIVLDGSN…AALTDIVDAL (184 aa)). 5 FG-GAP repeats span residues 361 to 412 (HAEN…LFPP), 417 to 470 (EDEF…KDGA), 472 to 534 (RVAQ…SLLT), 535 to 593 (LQGT…GVRP), and 597 to 657 (QRIA…VTPQ). Aspartate 494, aspartate 496, aspartate 498, aspartate 502, aspartate 558, asparagine 560, aspartate 562, aspartate 566, aspartate 620, aspartate 622, aspartate 624, and aspartate 628 together coordinate Ca(2+). Disulfide bonds link cysteine 666–cysteine 675 and cysteine 681–cysteine 736. Residues asparagine 733 and asparagine 763 are each glycosylated (N-linked (GlcNAc...) asparagine). Cysteine 789 and cysteine 795 form a disulfide bridge. 5 N-linked (GlcNAc...) asparagine glycosylation sites follow: asparagine 839, asparagine 921, asparagine 1011, asparagine 1018, and asparagine 1039. The helical transmembrane segment at 1123–1145 (LWILIGSVLGGLLLLALLVFCLW) threads the bilayer. At 1146–1167 (KLGFFAHKKIPEEEKREEKLEQ) the chain is on the cytoplasmic side.

This sequence belongs to the integrin alpha chain family. As to quaternary structure, heterodimer of an alpha and a beta subunit. Alpha-10 associates with beta-1. As to expression, widely expressed with highest expression in muscle and heart. Found in articular cartilage.

Its subcellular location is the membrane. Functionally, integrin alpha-10/beta-1 is a receptor for collagen. This chain is Integrin alpha-10 (ITGA10), found in Homo sapiens (Human).